A 243-amino-acid polypeptide reads, in one-letter code: 1-(5-phosphoribosyl)-5-[(5-phosphoribosylamino)methylideneamino] imidazole-4-carboxamide isomerase (243 aa).

Catalysis depends on D8, which acts as the Proton acceptor. D129 serves as the catalytic Proton donor.

The protein belongs to the HisA/HisF family.

It is found in the cytoplasm. It carries out the reaction 1-(5-phospho-beta-D-ribosyl)-5-[(5-phospho-beta-D-ribosylamino)methylideneamino]imidazole-4-carboxamide = 5-[(5-phospho-1-deoxy-D-ribulos-1-ylimino)methylamino]-1-(5-phospho-beta-D-ribosyl)imidazole-4-carboxamide. The protein operates within amino-acid biosynthesis; L-histidine biosynthesis; L-histidine from 5-phospho-alpha-D-ribose 1-diphosphate: step 4/9. This is 1-(5-phosphoribosyl)-5-[(5-phosphoribosylamino)methylideneamino] imidazole-4-carboxamide isomerase from Nitratidesulfovibrio vulgaris (strain DSM 19637 / Miyazaki F) (Desulfovibrio vulgaris).